A 159-amino-acid chain; its full sequence is Cytochrome c-type biogenesis protein CcmE (159 aa).

Over 1 to 8 the chain is Cytoplasmic; it reads MNIRRKNR. The helical; Signal-anchor for type II membrane protein transmembrane segment at 9–29 threads the bilayer; it reads LWIACAVLAGLALTITLVLYA. At 30 to 159 the chain is on the periplasmic side; the sequence is LRSNIDLFYT…PESVYKDKAS (130 aa). Heme contacts are provided by histidine 130 and tyrosine 134. Residues 130–159 are disordered; that stretch reads HDENYTPPEVEKAMQENHRRPESVYKDKAS.

The protein belongs to the CcmE/CycJ family.

Its subcellular location is the cell inner membrane. Its function is as follows. Heme chaperone required for the biogenesis of c-type cytochromes. Transiently binds heme delivered by CcmC and transfers the heme to apo-cytochromes in a process facilitated by CcmF and CcmH. This is Cytochrome c-type biogenesis protein CcmE from Citrobacter koseri (strain ATCC BAA-895 / CDC 4225-83 / SGSC4696).